The chain runs to 164 residues: C-phycoerythrin class 1 subunit alpha (164 aa).

Residues cysteine 82 and cysteine 139 each coordinate (2R,3E)-phycoerythrobilin.

This sequence belongs to the phycobiliprotein family. Heterodimer of an alpha and a beta chain. Contains two covalently linked phycoerythrobilin chromophores.

It localises to the cellular thylakoid membrane. In terms of biological role, light-harvesting photosynthetic bile pigment-protein from the phycobiliprotein complex. This chain is C-phycoerythrin class 1 subunit alpha (cpeA), found in Synechococcus sp. (strain WH8020).